The chain runs to 216 residues: ATP-dependent dethiobiotin synthetase BioD (216 aa).

ATP is bound at residue 12–17; sequence NVGKTF. Residue Thr-16 coordinates Mg(2+). Residue Lys-36 is part of the active site. Ser-40 serves as a coordination point for substrate. ATP is bound by residues Asp-53, 110–113, and 170–171; these read EGAG and NQ. Asp-53 and Glu-110 together coordinate Mg(2+).

Belongs to the dethiobiotin synthetase family. In terms of assembly, homodimer. It depends on Mg(2+) as a cofactor.

It localises to the cytoplasm. The catalysed reaction is (7R,8S)-7,8-diammoniononanoate + CO2 + ATP = (4R,5S)-dethiobiotin + ADP + phosphate + 3 H(+). It participates in cofactor biosynthesis; biotin biosynthesis; biotin from 7,8-diaminononanoate: step 1/2. In terms of biological role, catalyzes a mechanistically unusual reaction, the ATP-dependent insertion of CO2 between the N7 and N8 nitrogen atoms of 7,8-diaminopelargonic acid (DAPA, also called 7,8-diammoniononanoate) to form a ureido ring. This Vesicomyosocius okutanii subsp. Calyptogena okutanii (strain HA) protein is ATP-dependent dethiobiotin synthetase BioD.